The sequence spans 487 residues: Probable glycine dehydrogenase (decarboxylating) subunit 2 (487 aa).

Lys269 bears the N6-(pyridoxal phosphate)lysine mark.

The protein belongs to the GcvP family. C-terminal subunit subfamily. As to quaternary structure, the glycine cleavage system is composed of four proteins: P, T, L and H. In this organism, the P 'protein' is a heterodimer of two subunits. It depends on pyridoxal 5'-phosphate as a cofactor.

The catalysed reaction is N(6)-[(R)-lipoyl]-L-lysyl-[glycine-cleavage complex H protein] + glycine + H(+) = N(6)-[(R)-S(8)-aminomethyldihydrolipoyl]-L-lysyl-[glycine-cleavage complex H protein] + CO2. In terms of biological role, the glycine cleavage system catalyzes the degradation of glycine. The P protein binds the alpha-amino group of glycine through its pyridoxal phosphate cofactor; CO(2) is released and the remaining methylamine moiety is then transferred to the lipoamide cofactor of the H protein. The chain is Probable glycine dehydrogenase (decarboxylating) subunit 2 from Prosthecochloris aestuarii (strain DSM 271 / SK 413).